Here is a 513-residue protein sequence, read N- to C-terminus: ATP synthase subunit alpha (513 aa).

ATP is bound at residue 169–176; that stretch reads GDRQTGKT.

It belongs to the ATPase alpha/beta chains family. As to quaternary structure, F-type ATPases have 2 components, CF(1) - the catalytic core - and CF(0) - the membrane proton channel. CF(1) has five subunits: alpha(3), beta(3), gamma(1), delta(1), epsilon(1). CF(0) has three main subunits: a(1), b(2) and c(9-12). The alpha and beta chains form an alternating ring which encloses part of the gamma chain. CF(1) is attached to CF(0) by a central stalk formed by the gamma and epsilon chains, while a peripheral stalk is formed by the delta and b chains.

The protein resides in the cell inner membrane. It catalyses the reaction ATP + H2O + 4 H(+)(in) = ADP + phosphate + 5 H(+)(out). Its function is as follows. Produces ATP from ADP in the presence of a proton gradient across the membrane. The alpha chain is a regulatory subunit. The polypeptide is ATP synthase subunit alpha (Klebsiella pneumoniae subsp. pneumoniae (strain ATCC 700721 / MGH 78578)).